The primary structure comprises 343 residues: tRNA N6-adenosine threonylcarbamoyltransferase (343 aa).

Fe cation contacts are provided by His-111 and His-115. Substrate is bound by residues Ala-133–Gly-137, Asp-166, Gly-179, Asp-183, and Asn-273. Fe cation is bound at residue Asp-301.

This sequence belongs to the KAE1 / TsaD family. It depends on Fe(2+) as a cofactor.

It localises to the cytoplasm. The enzyme catalyses L-threonylcarbamoyladenylate + adenosine(37) in tRNA = N(6)-L-threonylcarbamoyladenosine(37) in tRNA + AMP + H(+). Required for the formation of a threonylcarbamoyl group on adenosine at position 37 (t(6)A37) in tRNAs that read codons beginning with adenine. Is involved in the transfer of the threonylcarbamoyl moiety of threonylcarbamoyl-AMP (TC-AMP) to the N6 group of A37, together with TsaE and TsaB. TsaD likely plays a direct catalytic role in this reaction. The protein is tRNA N6-adenosine threonylcarbamoyltransferase of Geotalea uraniireducens (strain Rf4) (Geobacter uraniireducens).